Consider the following 729-residue polypeptide: Glycine--tRNA ligase, mitochondrial 1 (729 aa).

Methionine 1 bears the N-acetylmethionine mark. The N-terminal 28 residues, 1-28, are a transit peptide targeting the mitochondrion; sequence MRIFSTFVFHRRQQIFNLRQFQTTTILR. The WHEP-TRS domain maps to 50 to 106; the sequence is SLSEKSSSVEAQGNAVRALKASRAAKPEIDAAIEQLNKLKLEKSTVEKELQSIISSS. A glycine-binding site is contributed by glutamate 296. Residues 328 to 330 and 339 to 340 each bind ATP; these read RNE and RV. A glycine-binding site is contributed by glutamate 347. ATP is bound at residue 454–455; that stretch reads EC. Residue 575–577 participates in glycine binding; the sequence is EPS. Arginine 582 is a binding site for ATP.

Belongs to the class-II aminoacyl-tRNA synthetase family. Homodimer.

The protein localises to the mitochondrion. It is found in the cytoplasm. It localises to the cytosol. The enzyme catalyses tRNA(Gly) + glycine + ATP = glycyl-tRNA(Gly) + AMP + diphosphate. It carries out the reaction 2 ATP + H(+) = P(1),P(4)-bis(5'-adenosyl) tetraphosphate + diphosphate. In terms of biological role, catalyzes the ATP-dependent ligation of glycine to the 3'-end of its cognate tRNA, via the formation of an aminoacyl-adenylate intermediate (Gly-AMP). Also produces diadenosine tetraphosphate (Ap4A), a universal pleiotropic signaling molecule needed for cell regulation pathways, by direct condensation of 2 ATPs. Thereby, may play a special role in Ap4A homeostasis. This chain is Glycine--tRNA ligase, mitochondrial 1, found in Arabidopsis thaliana (Mouse-ear cress).